Consider the following 495-residue polypeptide: Maternal protein exuperantia-1 (495 aa).

Disordered stretches follow at residues 197 to 217 (DESA…SSND) and 377 to 495 (TIKP…AATN). Composition is skewed to polar residues over residues 207 to 216 (ENVNRNGSSN) and 398 to 414 (AASS…TSTE).

Ensures the proper localization of the mRNA of the bicoid gene to the anterior regions of the oocyte thus playing a fundamental role in the establishment of the polarity of the oocyte. May bind the bcd mRNA. The polypeptide is Maternal protein exuperantia-1 (exu1) (Drosophila pseudoobscura pseudoobscura (Fruit fly)).